A 415-amino-acid polypeptide reads, in one-letter code: Alpha-N-acetylgalactosaminidase (415 aa).

The signal sequence occupies residues 1 to 17; the sequence is MLQKTVLLLALVAQVLM. 3 cysteine pairs are disulfide-bonded: Cys38–Cys80, Cys42–Cys49, and Cys127–Cys158. Substrate is bound by residues 78 to 79 and Lys154; that span reads DD. The Nucleophile role is filled by Asp156. Asn177 carries N-linked (GlcNAc...) asparagine glycosylation. Cys187 and Cys209 are oxidised to a cystine. Position 188 (Ser188) interacts with substrate. N-linked (GlcNAc...) asparagine glycosylation occurs at Asn201. Residues Arg213 and Asp217 each coordinate substrate. The Proton donor role is filled by Asp217. Ser322 bears the Phosphoserine mark. Asn330 carries an N-linked (GlcNAc...) asparagine glycan. Phosphoserine is present on Ser332. Asn385 carries an N-linked (GlcNAc...) asparagine glycan.

Belongs to the glycosyl hydrolase 27 family. In terms of assembly, homodimer.

It localises to the lysosome. The catalysed reaction is Cleavage of non-reducing alpha-(1-&gt;3)-N-acetylgalactosamine residues from human blood group A and AB mucin glycoproteins, Forssman hapten and blood group A lacto series glycolipids.. It carries out the reaction a neolactoside IV(3)-alpha-GalNAc,IV(2)-alpha-Fuc-nLc4Cer(d18:1(4E)) + H2O = a neolactoside IV(2)-alpha-Fuc-nLc4Cer(d18:1(4E)) + N-acetyl-alpha-D-galactosamine. It catalyses the reaction a neolactoside IV(3)-alpha-GalNAc,IV(2)-alpha-Fuc-nLc4Cer(d18:0) + H2O = a neolactoside IV(2)-alpha-Fuc-nLc4Cer(d18:0) + N-acetyl-alpha-D-galactosamine. The enzyme catalyses a globoside IV3GalNAc-Gb4Cer + H2O = N-acetyl-alpha-D-galactosamine + a globoside Gb4Cer. Removes terminal alpha-N-acetylgalactosamine residues from glycolipids and glycopeptides. Required for the breakdown of glycolipids. The protein is Alpha-N-acetylgalactosaminidase (Naga) of Rattus norvegicus (Rat).